A 370-amino-acid polypeptide reads, in one-letter code: MPFAPLANDSFLRACRRQATDYTPLWLMRQAGRYLPEYQASRARAGSFMGLATSVDYATEVTLQPLERFPLDAAILFSDILTVPDAMGLGLSFAEGEGPRLAKVVRDEATVAALAVPDMARLRYVFDAVASIRRALNGRVPLIGFSGSPWTLACYMVEGRGSDDYRLVKGLMYSRPDLMHRILAINADTVAAYLNAQIDAGAQAVMVFDSWGGVLADGAFQAFSLAYTARVLAQLQRTGVDGSDVPRIVFTKGGAPWLQDMQSLDCQVLGLDWTANLASARALVGGAVGGPGKALQGNIDPHVLLAPPARIVQQVQQVLDSFGPPHTDRSTTGPTHIFNLGHGISQFTPPAHVAALVEAVHSYSRAQRQG.

Substrate is bound by residues 29-33 (RQAGR), D79, Y155, S210, and H342.

Belongs to the uroporphyrinogen decarboxylase family. In terms of assembly, homodimer.

Its subcellular location is the cytoplasm. The catalysed reaction is uroporphyrinogen III + 4 H(+) = coproporphyrinogen III + 4 CO2. It participates in porphyrin-containing compound metabolism; protoporphyrin-IX biosynthesis; coproporphyrinogen-III from 5-aminolevulinate: step 4/4. Its function is as follows. Catalyzes the decarboxylation of four acetate groups of uroporphyrinogen-III to yield coproporphyrinogen-III. The protein is Uroporphyrinogen decarboxylase of Verminephrobacter eiseniae (strain EF01-2).